The chain runs to 358 residues: Protein RecA 2 (358 aa).

69 to 76 (GPESSGKT) contacts ATP. Residues 331–358 (GIGKSGAPSPRRRTSPRRPKVAARSAAV) are disordered. A compositionally biased stretch (basic residues) spans 340–351 (PRRRTSPRRPKV).

Belongs to the RecA family.

Its subcellular location is the cytoplasm. In terms of biological role, can catalyze the hydrolysis of ATP in the presence of single-stranded DNA, the ATP-dependent uptake of single-stranded DNA by duplex DNA, and the ATP-dependent hybridization of homologous single-stranded DNAs. It interacts with LexA causing its activation and leading to its autocatalytic cleavage. In Myxococcus xanthus, this protein is Protein RecA 2.